A 368-amino-acid chain; its full sequence is Aspartate-semialdehyde dehydrogenase (368 aa).

NADP(+) contacts are provided by residues 10–13 (RGMV), 37–38 (TS), and glutamine 72. Arginine 101 lines the phosphate pocket. Cysteine 134 serves as the catalytic Acyl-thioester intermediate. NADP(+) contacts are provided by residues 160 to 161 (SG) and proline 191. Residue glutamate 239 participates in substrate binding. A phosphate-binding site is contributed by lysine 242. Arginine 266 contacts substrate. Histidine 273 acts as the Proton acceptor in catalysis. Glutamine 349 serves as a coordination point for NADP(+).

Belongs to the aspartate-semialdehyde dehydrogenase family. Homodimer.

The catalysed reaction is L-aspartate 4-semialdehyde + phosphate + NADP(+) = 4-phospho-L-aspartate + NADPH + H(+). It participates in amino-acid biosynthesis; L-lysine biosynthesis via DAP pathway; (S)-tetrahydrodipicolinate from L-aspartate: step 2/4. Its pathway is amino-acid biosynthesis; L-methionine biosynthesis via de novo pathway; L-homoserine from L-aspartate: step 2/3. The protein operates within amino-acid biosynthesis; L-threonine biosynthesis; L-threonine from L-aspartate: step 2/5. Its function is as follows. Catalyzes the NADPH-dependent formation of L-aspartate-semialdehyde (L-ASA) by the reductive dephosphorylation of L-aspartyl-4-phosphate. The protein is Aspartate-semialdehyde dehydrogenase of Azotobacter vinelandii.